We begin with the raw amino-acid sequence, 452 residues long: Translation initiation factor eIF2B subunit gamma (452 aa).

Met-1 is modified (N-acetylmethionine). A Phosphoserine modification is found at Ser-260.

This sequence belongs to the eIF-2B gamma/epsilon subunits family. Component of the translation initiation factor 2B (eIF2B) complex which is a heterodecamer of two sets of five different subunits: alpha, beta, gamma, delta and epsilon. Subunits alpha, beta and delta comprise a regulatory subcomplex and subunits epsilon and gamma comprise a catalytic subcomplex. Within the complex, the hexameric regulatory complex resides at the center, with the two heterodimeric catalytic subcomplexes bound on opposite sides.

The protein localises to the cytoplasm. The protein resides in the cytosol. With respect to regulation, activated by the chemical integrated stress response (ISR) inhibitor ISRIB which stimulates guanine nucleotide exchange factor activity for both phosphorylated and unphosphorylated eIF2. Functionally, acts as a component of the translation initiation factor 2B (eIF2B) complex, which catalyzes the exchange of GDP for GTP on the eukaryotic initiation factor 2 (eIF2) complex gamma subunit. Its guanine nucleotide exchange factor activity is repressed when bound to eIF2 complex phosphorylated on the alpha subunit, thereby limiting the amount of methionyl-initiator methionine tRNA available to the ribosome and consequently global translation is repressed. This is Translation initiation factor eIF2B subunit gamma (EIF2B3) from Macaca fascicularis (Crab-eating macaque).